The following is a 760-amino-acid chain: Rho GTPase-activating protein 26 (760 aa).

Residues 7–262 enclose the BAR domain; sequence EFSECCLDSP…MKENPHEHKN (256 aa). The PH domain maps to 265-369; that stretch reads PYTMEGYLYV…WMEAMDGREP (105 aa). Residues 383–568 form the Rho-GAP domain; sequence AQLDSIGFSI…ILIENHEKIF (186 aa). 2 disordered regions span residues 571-617 and 658-701; these read VPET…ESRN and PNRP…SPIS. The span at 605–617 shows a compositional bias: polar residues; the sequence is HTAQPNEKQESRN. Residues 674 to 701 show a composition bias toward low complexity; the sequence is LSPSWPMFSAPSSPMPTSSTSSDSSPIS. Positions 702-760 constitute an SH3 domain; that stretch reads SPLRKARALYACKAEHDSELSFTAGTVFDNVHPSQEPGWLEGTLNGKTGLIPENYVEFL.

As to quaternary structure, binds to the C-terminus of PTK2/FAK1. In terms of tissue distribution, detected in embryonic brain and liver, and at low levels in embryonic eye, heart, lung, intestine and skeletal muscle.

It is found in the cell junction. The protein resides in the focal adhesion. The protein localises to the cytoplasm. Its subcellular location is the cytoskeleton. It localises to the endosome membrane. Functionally, GTPase-activating protein for RHOA and CDC42. May be involved in the regulation of neosynthesized protein export through a Rab-endososomal dependent export route. This chain is Rho GTPase-activating protein 26 (ARHGAP26), found in Gallus gallus (Chicken).